The chain runs to 2587 residues: MGKYKRAGETSRKTRVKMHKSGKNWVRTLISQIGLMHFLGGSISEKKINVDVYEQKNISASTILKGAVALGALTGATVVSGNVFADETVLAKETTLTTTDANEVKLSSENFDSEKAEEKISLSQSESASESVSESISESVSESVSTSESVSESVSESVSESISESVSESISESISESVSESTSTSIVLSESGAASGNKATSKGTEEKQDSVRENLDKMISEAEVLNDMAARKLITLDAEQQLELMKSLVATQSQLEATKNLIGDPNATVADLQIAYTTLGNNTQALGNELIKLNPNGQIYAVLNNTEASRAATLRSTTTGTKTTFTISDFSNGGTQYYWAGGNANNLKNPISSISAVYDSATGKISWTVEYDPTTILKSPALKTLKTYTGIYIDTSSDSKLSTPTNVLIDGAATNPVTNFYGNGSKGIEYVSKGTTKGVTKHTITFDTAFSGRANDLADLKIKMLAATTLSDPHFYEDGSKGNYGRYNGQTAPYVIANDSGTAIGGYQVSGVNADSIPSDTTSQSESTSKSESTSKSISESVIESISESVIGSVSESVSESVSESVSESITESVSESVSESISESVSESVSESISESVSESVSESISESVSESVSESISESVSESVSESISESISESVSESVSESISESVSESVSESISESVSESVSESISESVSESVSESISESVSESVSESISESVSESVSESISESVSESVSESISESVSESVSESISESVSESVSESISESVSESVSESISESVSESVSESISESVSESVSESVSESVSESVSESISESVSESVSESVSESVSESVSESVSESISESVSESVSESISESVSESVSESISESVSESVSESISESVSESVSESISESVSESVSESISESVSESVSESISESVSESVSESISESVSESVSESISESVSESVSESISESVSESVSESVSESVSESVSESVSESVSESISESVSESVSESISESVSESVSESISESVSESVSESISESVSESVSESISESVSESVSESVSESVSESVSESVSESVSESISESVSESVSESVSESISESVSESVSESISESVSESVSESISESVSESVSESVSESVSESVSESISESVSESVSESISESVSESVSESISESVSESVSESISESVSESVSESISESVSESVSESISESVSESVSESVSESVSESVSESISESVSESVSESISESVSESVSESVSESISESVSESVSESISESVSESVSESISESVSESVSESISESVSESVSESVSESVSESVSESVSESVSESVSESVSESISESVSESVSESVSESISESVSESVSESISESVSESVSESISESVSESVSESISESVSESVSESISESVSESVSESISESVSESVSESVSESVSESVSESISESVSESVSESISESVSESVSESISESVSESVSESISESVSESVSESVSESISESVSESVSESISESVSESVSESISESVSESVSESVSESVSESVSESVSESVSESVSESISESVSESVSESISESVSESVSESISESVSESVSESISESVSESVSESISESVSESVSESISESVSESVSESISESVSESVSESVSESVSESVSESISESVSESVSESISESVSESVSESVSESVSESVSESVSESVSESVSESISESVSESVSESVSESVSESVSESISESVSESVSESISESVSESVSESISESVSESVSESISESVSESVSESISESVSESVSESISESVSESVSESISESVSESVSESVSESVSESVSESVSESVSESISESVSESVSESISESVSESVSESISESVSESVSESVSESVSESVSESISESVSESVSESISESVSESVSESISESVSESVSESISESVSESVSESVSESISESVSESVSESISESVSESVSESISESVSESVSESISESVSESVSESISESVSESVSESISESVSESVSESVSESVSESVSESISESVSESISESVSESVSESISESVSESVSESISESVSESVSESISESVSESVSESISESVSESVSESISESVSESVSESISESVSESVSESISESVSESVSESVSESISESVSESVSESISESVSESVSESISESVSESVSESVSESVSESVSESVSESVSESVSESISESVSESVSESISESVSESVSESISESVSESVSESISESVSESVSESISESVSESVSESISESVSESVSESISESVSESVSESVSESVSESVSESISESVSESVSESVSESISESVSESVSESISESVSESVSESVSESVSESVSESVSESVSESVSESISESVSESVSESVSESVSESVSESISESVSESVSESISESVSESVSESISESVSESVSESISESVSESVSESISESVSESVSESISESVSESVSESISESVSESVSESISESVSESVSESVSESISESVSESVSESISESVSESVSESISESVSESVSESISESVSESVSESVSESVSESVSESVSESVSESISESVSESVSESISESVSESVSESVSESVSESVSESISESVSESISESVSESVSESISESVSESVSESISERTLPNTGENVSSSLGLVGLSGLLFGALLGRKKRKSEDAE.

Residues 1–85 (MGKYKRAGET…ATVVSGNVFA (85 aa)) form the signal peptide. 4 disordered regions span residues 107 to 158 (SSEN…SESV), 173 to 212 (SISE…DSVR), 515 to 539 (DSIP…KSIS), and 568 to 2558 (ESIT…GENV). The ser-rich region 1, SRR1 stretch occupies residues 107–195 (SSENFDSEKA…IVLSESGAAS (89 aa)). 2 stretches are compositionally biased toward low complexity: residues 121–158 (SLSQ…SESV) and 173–191 (SISE…LSES). Residues 191-522 (SGAASGNKAT…NADSIPSDTT (332 aa)) form a sufficient to block adherence to beads region. Residues 192–202 (GAASGNKATSK) are compositionally biased toward polar residues. A compositionally biased stretch (basic and acidic residues) spans 203–212 (GTEEKQDSVR). Residues 516–2561 (SIPSDTTSQS…PNTGENVSSS (2046 aa)) form a ser-rich region 2, SRR2 region. Composition is skewed to low complexity over residues 519 to 539 (SDTT…KSIS) and 568 to 2545 (ESIT…VSES). The interval 2367–2587 (SESISESVSE…RKKRKSEDAE (221 aa)) is required for localization to cell wall, fimbriae formation and adherence to saliva-coated hydroxyapatite beads (SHA) but not secretion. The LPXTG sorting signal motif lies at 2551 to 2555 (LPNTG). Thr2554 is subject to Pentaglycyl murein peptidoglycan amidated threonine. The propeptide at 2555 to 2587 (GENVSSSLGLVGLSGLLFGALLGRKKRKSEDAE) is removed by sortase.

This sequence belongs to the serine-rich repeat protein (SRRP) family. Post-translationally, glycosylated; occurs within the cytoplasm. It is probable that most of the Ser residues in SSR1 and SSR2 are O-GlcNAcylated. Sequential glycosylation by sugar transferases are able to generate complex sugar polymorphisms.

Its subcellular location is the cytoplasm. It localises to the secreted. It is found in the cell wall. The protein resides in the fimbrium. The major structural element of fimbriae. Required for adherence to saliva-coated hydroxyapatite beads (SHA), an in vitro tooth model. A Fap1-dependent increase in adherence is seen as the pH is reduced from pH 8 to pH 5. The protein is Fap1 adhesin (fap1) of Streptococcus parasanguinis.